Consider the following 348-residue polypeptide: Phosphoribosylformylglycinamidine cyclo-ligase (348 aa).

It belongs to the AIR synthase family.

Its subcellular location is the cytoplasm. The catalysed reaction is 2-formamido-N(1)-(5-O-phospho-beta-D-ribosyl)acetamidine + ATP = 5-amino-1-(5-phospho-beta-D-ribosyl)imidazole + ADP + phosphate + H(+). The protein operates within purine metabolism; IMP biosynthesis via de novo pathway; 5-amino-1-(5-phospho-D-ribosyl)imidazole from N(2)-formyl-N(1)-(5-phospho-D-ribosyl)glycinamide: step 2/2. This Geobacter sulfurreducens (strain ATCC 51573 / DSM 12127 / PCA) protein is Phosphoribosylformylglycinamidine cyclo-ligase.